A 183-amino-acid chain; its full sequence is Protein GrpE (183 aa).

Positions 1–14 (MSNEENKINEEALK) are enriched in basic and acidic residues. The interval 1-20 (MSNEENKINEEALKQQDAAE) is disordered.

It belongs to the GrpE family. Homodimer.

It is found in the cytoplasm. Functionally, participates actively in the response to hyperosmotic and heat shock by preventing the aggregation of stress-denatured proteins, in association with DnaK and GrpE. It is the nucleotide exchange factor for DnaK and may function as a thermosensor. Unfolded proteins bind initially to DnaJ; upon interaction with the DnaJ-bound protein, DnaK hydrolyzes its bound ATP, resulting in the formation of a stable complex. GrpE releases ADP from DnaK; ATP binding to DnaK triggers the release of the substrate protein, thus completing the reaction cycle. Several rounds of ATP-dependent interactions between DnaJ, DnaK and GrpE are required for fully efficient folding. This chain is Protein GrpE, found in Vibrio vulnificus (strain CMCP6).